We begin with the raw amino-acid sequence, 159 residues long: MNITILSVGKLKEKYIKQGIDEYKKRLSAYAKIQEIEVPDEKAPEHLSTEDMRLVKKKEGERLLAKISADSYVIALAIEGNMKTSEQLAKNIEQLGTYGKSKIAFIIGGSLGLSNDVYARADELLSFSKMTFPHQLMKLVLFEQLYRSFRIMRGEPYHK.

S-adenosyl-L-methionine is bound by residues leucine 76, glycine 108, and 127 to 132 (FSKMTF).

Belongs to the RNA methyltransferase RlmH family. In terms of assembly, homodimer.

The protein resides in the cytoplasm. The enzyme catalyses pseudouridine(1915) in 23S rRNA + S-adenosyl-L-methionine = N(3)-methylpseudouridine(1915) in 23S rRNA + S-adenosyl-L-homocysteine + H(+). Functionally, specifically methylates the pseudouridine at position 1915 (m3Psi1915) in 23S rRNA. The polypeptide is Ribosomal RNA large subunit methyltransferase H (Shouchella clausii (strain KSM-K16) (Alkalihalobacillus clausii)).